Reading from the N-terminus, the 330-residue chain is Putative [LysW]-L-2-aminoadipate/[LysW]-L-glutamate phosphate reductase (330 aa).

NADP(+) contacts are provided by residues 10–13 and 34–36; these read SGYI and SRK. Cys142 is a catalytic residue. Residue Asn297 participates in NADP(+) binding.

It belongs to the NAGSA dehydrogenase family. Type 1 subfamily. LysY sub-subfamily.

It localises to the cytoplasm. It carries out the reaction [amino-group carrier protein]-C-terminal-N-(1-carboxy-5-oxopentan-1-yl)-L-glutamine + phosphate + NADP(+) = [amino-group carrier protein]-C-terminal-N-(1-carboxy-5-phosphooxy-5-oxopentan-1-yl)-L-glutamine + NADPH + H(+). The enzyme catalyses [amino-group carrier protein]-C-terminal-gamma-(L-glutamyl-5-semialdehyde)-L-glutamate + phosphate + NADP(+) = [amino-group carrier protein]-C-terminal-gamma-(5-phospho-L-glutamyl)-L-glutamate + NADPH + H(+). It functions in the pathway amino-acid biosynthesis; L-lysine biosynthesis via AAA pathway; L-lysine from L-alpha-aminoadipate (Thermus route): step 3/5. It participates in amino-acid biosynthesis; L-arginine biosynthesis. Its function is as follows. Involved in both the arginine and lysine biosynthetic pathways. This is Putative [LysW]-L-2-aminoadipate/[LysW]-L-glutamate phosphate reductase from Pyrococcus abyssi (strain GE5 / Orsay).